Reading from the N-terminus, the 529-residue chain is Na(+)/H(+) antiporter NhaB (529 aa).

A run of 12 helical transmembrane segments spans residues 13 to 33, 34 to 54, 90 to 110, 113 to 133, 136 to 156, 205 to 225, 241 to 261, 306 to 326, 327 to 347, 351 to 371, 451 to 471, and 479 to 499; these read FLGK…IINP, IVFF…EFIF, LVAN…IYFM, LLLF…ILSL, CFAA…AVVI, LLMH…VGEP, FLIR…LTCF, GLIA…VGLI, GLSV…HSLG, EEAL…AVII, ATPN…APLI, and VIMA…GIVF.

Belongs to the NhaB Na(+)/H(+) (TC 2.A.34) antiporter family.

It localises to the cell inner membrane. The catalysed reaction is 2 Na(+)(in) + 3 H(+)(out) = 2 Na(+)(out) + 3 H(+)(in). In terms of biological role, na(+)/H(+) antiporter that extrudes sodium in exchange for external protons. The sequence is that of Na(+)/H(+) antiporter NhaB from Vibrio vulnificus (strain CMCP6).